The chain runs to 109 residues: Large ribosomal subunit protein uL22 (109 aa).

Belongs to the universal ribosomal protein uL22 family. As to quaternary structure, part of the 50S ribosomal subunit.

In terms of biological role, this protein binds specifically to 23S rRNA; its binding is stimulated by other ribosomal proteins, e.g. L4, L17, and L20. It is important during the early stages of 50S assembly. It makes multiple contacts with different domains of the 23S rRNA in the assembled 50S subunit and ribosome. Functionally, the globular domain of the protein is located near the polypeptide exit tunnel on the outside of the subunit, while an extended beta-hairpin is found that lines the wall of the exit tunnel in the center of the 70S ribosome. The sequence is that of Large ribosomal subunit protein uL22 from Paraburkholderia xenovorans (strain LB400).